The following is a 95-amino-acid chain: Aspartyl/glutamyl-tRNA(Asn/Gln) amidotransferase subunit C (95 aa).

It belongs to the GatC family. In terms of assembly, heterotrimer of A, B and C subunits.

The catalysed reaction is L-glutamyl-tRNA(Gln) + L-glutamine + ATP + H2O = L-glutaminyl-tRNA(Gln) + L-glutamate + ADP + phosphate + H(+). The enzyme catalyses L-aspartyl-tRNA(Asn) + L-glutamine + ATP + H2O = L-asparaginyl-tRNA(Asn) + L-glutamate + ADP + phosphate + 2 H(+). Functionally, allows the formation of correctly charged Asn-tRNA(Asn) or Gln-tRNA(Gln) through the transamidation of misacylated Asp-tRNA(Asn) or Glu-tRNA(Gln) in organisms which lack either or both of asparaginyl-tRNA or glutaminyl-tRNA synthetases. The reaction takes place in the presence of glutamine and ATP through an activated phospho-Asp-tRNA(Asn) or phospho-Glu-tRNA(Gln). This is Aspartyl/glutamyl-tRNA(Asn/Gln) amidotransferase subunit C from Cereibacter sphaeroides (strain ATCC 17025 / ATH 2.4.3) (Rhodobacter sphaeroides).